The chain runs to 182 residues: Early upstream open reading frame (182 aa).

Belongs to the EUO family.

This Chlamydophila psittaci (strain ATCC VR-125 / 6BC) (Chlamydia psittaci) protein is Early upstream open reading frame.